Here is a 729-residue protein sequence, read N- to C-terminus: Palmitoyltransferase akr1 (729 aa).

Over residues 1 to 11 (MVHHDGADAHA) the composition is skewed to basic and acidic residues. A disordered region spans residues 1–28 (MVHHDGADAHAGHAAPAQPPMKSDTATP). Over 1 to 297 (MVHHDGADAH…DRRSFMTKFT (297 aa)) the chain is Cytoplasmic. ANK repeat units follow at residues 76–105 (EGIT…EINK), 110–139 (SVAT…DPLI), 143–172 (QGYN…PVDV), 176–205 (YGHT…SVHA), and 209–238 (QGFT…DRFA). 2 helical membrane passes run 298 to 318 (FLWP…MPVF) and 319 to 339 (VGIP…QQVI). Over 340–354 (AYAPPDMRQLQKTPW) the chain is Cytoplasmic. The chain crosses the membrane as a helical span at residues 355–375 (MAGIFAGSLFLCIMNWLLHIF). Over 376–383 (GSTMFGQD) the chain is Lumenal. The chain crosses the membrane as a helical span at residues 384–404 (SAVIPNLLFAFFISMTIWFYI). Residues 405–483 (RCMVDDPGFV…YNCIGVNNHR (79 aa)) are Cytoplasmic-facing. The 51-residue stretch at 440–490 (NFCVTCMIRTPLRSKHCRRCQRCVAKHDHHCPWVYNCIGVNNHRHFFFYLI) folds into the DHHC domain. The active-site S-palmitoyl cysteine intermediate is Cys-470. Residues 484–504 (HFFFYLINLTLSVVTYDWLTY) form a helical membrane-spanning segment. Topologically, residues 505–534 (RYLSTLSETASDECNILAPSLCRIVNADTY) are lumenal. The chain crosses the membrane as a helical span at residues 535 to 555 (SLLTAIWASLQLTWVSMLLFV). Over 556 to 729 (QFVQVSSAMT…GYESVAGEEV (174 aa)) the chain is Cytoplasmic. Disordered regions lie at residues 587 to 620 (STGA…HGHN) and 709 to 729 (TSGG…GEEV). Positions 592-603 (LNPPSLPAPGPS) are enriched in pro residues. The span at 611 to 620 (HGGRHAHGHN) shows a compositional bias: basic residues.

The protein belongs to the DHHC palmitoyltransferase family. AKR/ZDHHC17 subfamily.

Its subcellular location is the early endosome membrane. The protein resides in the golgi apparatus membrane. It carries out the reaction L-cysteinyl-[protein] + hexadecanoyl-CoA = S-hexadecanoyl-L-cysteinyl-[protein] + CoA. Its function is as follows. Palmitoyltransferase specific for casein kinase 1. The chain is Palmitoyltransferase akr1 (ptr-1) from Neurospora crassa (strain ATCC 24698 / 74-OR23-1A / CBS 708.71 / DSM 1257 / FGSC 987).